We begin with the raw amino-acid sequence, 460 residues long: V-type ATP synthase beta chain (460 aa).

It belongs to the ATPase alpha/beta chains family.

In terms of biological role, produces ATP from ADP in the presence of a proton gradient across the membrane. The V-type beta chain is a regulatory subunit. The polypeptide is V-type ATP synthase beta chain (Clostridium novyi (strain NT)).